The sequence spans 1611 residues: MSQVSGGKVPSYHAPPFDSPLSGATIHELRCLDTKVQLGFHLVPHIAKTLITELPSSAYVLVTDTNLAKLGAIDKFRKAFEAIPGARLLVYELAPGEESKSRETKAAIEDWMLEHRLTRDTVVLACGGGVIGDLVGFVAATFMRGLKYVQIPTTLLAMVDSSVGGKTAIDHPHGKNLIGAFHQPRYVFIDAAWLLTLPEREFSNGMAEVIKTAAIWDAADFEKLESESASIRAAVMGDEARQQSAAQGHTLATRTSSQSLLLDVIRGSVGVKAHIVTIDEKETGLRNLVNFGHSVGHAIEAVLTPDILHGECVAVGMVLEAEIARLVHGLPQVAIGRLVRCLRLYNLPVTLADARIMALSKVRELTTARVLDIMRVDKKNAGAQKKIVLLSRIGATVEERASTVSDAMIERVLAPAMLVRESVSAPRPPLTIHTPGSKSVSNRALVLAALSGGTCRLRHLLHSDDTQVMMQALAQLRAADFAWEDNGATLVVHGQGGRVLASDEPVYLQNAGTAARFVTAVACLASSASCSGSDESSCHGVVHLTGNARMKQRPIGPLVDALRSNGARIDYVEQSNCLPLNVTASGALQGGRIELAADVSSQYVSAVLLCAPYAQNDVELALVGGKVISQPYIDMTIAMMQSFGVRVERVAEHVYRIPRTTYVAPSTYEVECDASSATYPLAIAAITGTTVTVPSLGRASLQGDAAFARKVLAPMGCQVEQNDVSTTVTGPPVGMLKALGAIDMESMTDAFITAAMLFAVATAPCDEYASSSTSASPSSTRITGIANQRVKECDRLRAVVTELAKLGVRAVEHDDGIEVFSTPISQLLPHASIYCYDDHRIAMAFSVLACVVPGAGTEIQEKRCVEKTWPSWWDVLGGPLNVPIAGARLNDALVSLVARSRQRGPPTPTTLYGRDASIVLIGMRASGKSHVGRSLAKLLHRTFVDADVVFSDMYDIGAFVQDHGWDAFRAEESRILESLLTQCSVGHVIALGGGVIESAASRALLARFREHVGPVVHIVRDFALIESFLATSDRPAYGEPLADVYARRLPLYAESSCMEAVNTGNDAALALSRQLRTPLGTPVPISPAFFLSLTFPRVQDAWSILDHASAGVDVLELRVDLLHADGQPSIDDVREQVALLRQYTSLPILYTVRSVSQGGRLPDEANEAYFALTRLGLRMGCEYVDIELTRPSDGIEELAQAKGQTRIVASFHDTSGTMHWMAPAMRRLYTRACVLGDIAKLVGFARTWQDSLDLESFRTRVAQEAPFPLIAINMQAAGQLSRIVNPLLTPVTHPALPVPAAPGQMSVRDIHHARHLLGLLPKRHFFLFGSPITHSQSPLIHNTAFELLGLPHVYARHETDSVDASVEALVRAGDFGGASVTIPHKLSIMQLLDSVSPHAQVIGAVNTIVPHRDETTGHMALHGENTDWRAIVDLVAKHDGGRTRACTALVIGAGGSARAALYAMHKLGASRILLYNRTFEKAVNLAEQVPVEWRVEPVDSLALAAKAKPNVIVSNVPAQGTSFTPGGADIVLPLDLLSSDGGVAIDMAYRPEITPLLTLAQQHQSWHGVRGIEILLAQAFHQFRLWTGLPPPCLDIETTVYAAYRAAAASM.

The 3-dehydroquinate synthase stretch occupies residues 1–406 (MSQVSGGKVP…VEERASTVSD (406 aa)). Residues 64 to 66 (DTN), 97 to 100 (EESK), 128 to 130 (GGV), and Asp133 contribute to the NAD(+) site. Residue Arg144 participates in 7-phospho-2-dehydro-3-deoxy-D-arabino-heptonate binding. 153–154 (TT) lines the NAD(+) pocket. Positions 160 and 166 each coordinate 7-phospho-2-dehydro-3-deoxy-D-arabino-heptonate. Lys175 contributes to the NAD(+) binding site. Residue Asn176 coordinates 7-phospho-2-dehydro-3-deoxy-D-arabino-heptonate. NAD(+)-binding positions include 193-196 (WLLT) and Asn204. Glu208 contributes to the Zn(2+) binding site. Residues 208 to 211 (EVIK) and Lys272 each bind 7-phospho-2-dehydro-3-deoxy-D-arabino-heptonate. The Proton acceptor; for 3-dehydroquinate synthase activity role is filled by Glu282. Residues 286 to 290 (RNLVN) and His293 contribute to the 7-phospho-2-dehydro-3-deoxy-D-arabino-heptonate site. His293 is a binding site for Zn(2+). The active-site Proton acceptor; for 3-dehydroquinate synthase activity is the His297. His309 and Lys378 together coordinate 7-phospho-2-dehydro-3-deoxy-D-arabino-heptonate. Position 309 (His309) interacts with Zn(2+). Residues 419–882 (VRESVSAPRP…WDVLGGPLNV (464 aa)) are EPSP synthase. Cys864 acts as the For EPSP synthase activity in catalysis. The tract at residues 915 to 1092 (DASIVLIGMR…VPISPAFFLS (178 aa)) is shikimate kinase. 922–929 (GMRASGKS) contacts ATP. Residues 1093-1309 (LTFPRVQDAW…AAPGQMSVRD (217 aa)) form a 3-dehydroquinase region. The Proton acceptor; for 3-dehydroquinate dehydratase activity role is filled by His1212. The active-site Schiff-base intermediate with substrate; for 3-dehydroquinate dehydratase activity is the Lys1240. The shikimate dehydrogenase stretch occupies residues 1322 to 1611 (KRHFFLFGSP…AAYRAAAASM (290 aa)).

This sequence in the N-terminal section; belongs to the sugar phosphate cyclases superfamily. Dehydroquinate synthase family. The protein in the 2nd section; belongs to the EPSP synthase family. In the 3rd section; belongs to the shikimate kinase family. It in the 4th section; belongs to the type-I 3-dehydroquinase family. This sequence in the C-terminal section; belongs to the shikimate dehydrogenase family. As to quaternary structure, homodimer. The cofactor is Zn(2+).

Its subcellular location is the cytoplasm. It catalyses the reaction 7-phospho-2-dehydro-3-deoxy-D-arabino-heptonate = 3-dehydroquinate + phosphate. The enzyme catalyses 3-dehydroquinate = 3-dehydroshikimate + H2O. The catalysed reaction is shikimate + NADP(+) = 3-dehydroshikimate + NADPH + H(+). It carries out the reaction shikimate + ATP = 3-phosphoshikimate + ADP + H(+). It catalyses the reaction 3-phosphoshikimate + phosphoenolpyruvate = 5-O-(1-carboxyvinyl)-3-phosphoshikimate + phosphate. It functions in the pathway metabolic intermediate biosynthesis; chorismate biosynthesis; chorismate from D-erythrose 4-phosphate and phosphoenolpyruvate: step 2/7. Its pathway is metabolic intermediate biosynthesis; chorismate biosynthesis; chorismate from D-erythrose 4-phosphate and phosphoenolpyruvate: step 3/7. The protein operates within metabolic intermediate biosynthesis; chorismate biosynthesis; chorismate from D-erythrose 4-phosphate and phosphoenolpyruvate: step 4/7. It participates in metabolic intermediate biosynthesis; chorismate biosynthesis; chorismate from D-erythrose 4-phosphate and phosphoenolpyruvate: step 5/7. It functions in the pathway metabolic intermediate biosynthesis; chorismate biosynthesis; chorismate from D-erythrose 4-phosphate and phosphoenolpyruvate: step 6/7. Its function is as follows. The AROM polypeptide catalyzes 5 consecutive enzymatic reactions in prechorismate polyaromatic amino acid biosynthesis. The protein is Pentafunctional AROM polypeptide of Malassezia globosa (strain ATCC MYA-4612 / CBS 7966) (Dandruff-associated fungus).